A 76-amino-acid chain; its full sequence is Putative snRNP Sm-like protein (76 aa).

One can recognise a Sm domain in the interval 4–76; that stretch reads RPLDVIHKSL…VLAISPTEEG (73 aa).

Belongs to the snRNP Sm proteins family.

This Pyrococcus furiosus (strain ATCC 43587 / DSM 3638 / JCM 8422 / Vc1) protein is Putative snRNP Sm-like protein.